Here is a 283-residue protein sequence, read N- to C-terminus: 1-deoxypentalenic acid 11-beta-hydroxylase (283 aa).

R117 contributes to the substrate binding site. H135 and D137 together coordinate Fe cation. Residues 135–137 (HQD) and W151 contribute to the 2-oxoglutarate site. R186 serves as a coordination point for substrate. H224 lines the Fe cation pocket. The 2-oxoglutarate site is built by S226 and R238. A disordered region spans residues 251 to 283 (HRGFNALTPWPESAKDASKGIMSKITGTPTTAE).

It belongs to the PhyH family. It depends on Fe cation as a cofactor. L-ascorbate is required as a cofactor.

The catalysed reaction is 1-deoxypentalenate + 2-oxoglutarate + O2 = 1-deoxy-11beta-hydroxypentalenate + succinate + CO2. It participates in antibiotic biosynthesis; pentalenolactone biosynthesis. In terms of biological role, catalyzes the conversion of 1-deoxypentalenic acid to 11-beta-hydroxy-1-deoxypentalenic acid in the biosynthesis of pentalenolactone antibiotic. This is 1-deoxypentalenic acid 11-beta-hydroxylase (pntH) from Streptomyces arenae.